The following is a 392-amino-acid chain: Transcription factor GATA-4 (392 aa).

The tract at residues 75–113 (SSAYNPGTSHPPVSPRFTFSSSPPITAPSSREVSYSSPL) is disordered. A compositionally biased stretch (polar residues) spans 91–113 (FTFSSSPPITAPSSREVSYSSPL). GATA-type zinc fingers lie at residues 184-208 (CVNCGAMSTPLWRRDGTGHYLCNAC) and 238-262 (CANCHTTTTTLWRRNAEGEPVCNAC). Disordered regions lie at residues 279–339 (KEGI…HSNS) and 359–392 (MPSLKLSPQNHHSTFNPSPQANSKHDSWNNLVLA). The segment covering 284 to 293 (TRKRKPKNLS) has biased composition (basic residues). Positions 302 to 316 (SGSDSLTPSTSSTNS) are enriched in low complexity. A compositionally biased stretch (polar residues) spans 364-380 (LSPQNHHSTFNPSPQAN).

As to expression, expressed at high levels in heart, small intestine, stomach, ovary, and liver. Found at much lower levels in lung, spleen, pancreas and skin.

The protein resides in the nucleus. Functionally, transcriptional activator that binds to the consensus sequence 5'-AGATAG-3'. Associated with cardiac specification and can regulate cardiac-specific transcription during embryogenesis. Activates the expression of cardiac MHC-alpha in vivo. This is Transcription factor GATA-4 (gata4) from Xenopus laevis (African clawed frog).